The primary structure comprises 422 residues: Protein FAM53B (422 aa).

Phosphoserine is present on residues serine 119, serine 168, serine 170, serine 180, serine 213, and serine 269. Disordered regions lie at residues 193 to 225 (GQPC…GRLD) and 243 to 269 (CPPS…RSRS). Residues 244-269 (PPSANSTPASTPELARRSSGLARSRS) are compositionally biased toward low complexity. Positions 282 to 285 (KRRR) match the Nuclear localization signal motif. Serine 335 and serine 344 each carry phosphoserine.

This sequence belongs to the FAM53 family. As to quaternary structure, interacts with CTNNB1.

The protein resides in the nucleus. Acts as a regulator of Wnt signaling pathway by regulating beta-catenin (CTNNB1) nuclear localization. The protein is Protein FAM53B of Mus musculus (Mouse).